A 37-amino-acid polypeptide reads, in one-letter code: Glucagon-1 (37 aa).

It belongs to the glucagon family.

Its subcellular location is the secreted. Its function is as follows. Glucagon plays a key role in glucose metabolism and homeostasis. Regulates blood glucose by increasing gluconeogenesis and decreasing glycolysis. The protein is Glucagon-1 of Huso dauricus (Kaluga sturgeon).